Here is a 2170-residue protein sequence, read N- to C-terminus: Supervillin (2170 aa).

The interaction with MYLK stretch occupies residues 1–167 (MKRKERIARR…NSRHSRTESG (167 aa)). Disordered stretches follow at residues 37-94 (EDTP…HSLE), 107-327 (RRRQ…QSES), 413-444 (PEPLERSPKSLLTSEDDRLVRGHKDPSGNKDL), 511-546 (DYTGPPQLQVPRHKDEAPSQELELQSSRAEGPGAEA), and 567-643 (RASK…EDEE). Phosphoserine is present on S50. Polar residues-rich tracts occupy residues 63–73 (PGSSLEKQTPS) and 81–90 (GIHSSGSMDT). Positions 134–166 (SRKDPDVTERRGKSDKQEEQSKDANSRHSRTES) are enriched in basic and acidic residues. A compositionally biased stretch (polar residues) spans 167 to 195 (GPRTSLVASQDCTPLGSNMSDQEQLLNVE). S220, S227, and S241 each carry phosphoserine. Residues 230–241 (QIPSSPLQQPAS) are compositionally biased toward polar residues. 2 stretches are compositionally biased toward basic and acidic residues: residues 261-272 (PTHEWFLQRDSE) and 286-297 (KVREKLVKEESA). Polar residues predominate over residues 298–313 (RSSPELTSESLTQRRQ). S299 and S300 each carry phosphoserine. The segment covering 427 to 444 (EDDRLVRGHKDPSGNKDL) has biased composition (basic and acidic residues). Basic and acidic residues-rich tracts occupy residues 570–582 (KKPELQSRVERSA) and 606–615 (ESRKTSERFR). Residues S632, S666, S728, and S761 each carry the phosphoserine modification. The tract at residues 743-771 (ASAHQKALARDQANEGRESAEPGEPDSST) is disordered. Over residues 750-762 (LARDQANEGRESA) the composition is skewed to basic and acidic residues. The residue at position 809 (Y809) is a Phosphotyrosine. A Phosphothreonine modification is found at T811. Phosphoserine is present on residues S857, S877, and S881. The disordered stretch occupies residues 887–909 (AWRPLVEHSGSKGMPGESGKTES). Phosphoserine is present on residues S960, S1011, S1031, and S1077. The interval 1117 to 1137 (HTQEVEQSLKKKRVTESRESQ) is disordered. The span at 1119-1137 (QEVEQSLKKKRVTESRESQ) shows a compositional bias: basic and acidic residues. Omega-N-methylarginine is present on R1159. A phosphoserine mark is found at S1181 and S1184. T1186 carries the phosphothreonine modification. A phosphoserine mark is found at S1190, S1278, and S1361. The interaction with NEB stretch occupies residues 1375–1643 (SNINLRSVNL…KFLDWTELKR (269 aa)). 5 Gelsolin-like repeats span residues 1397–1496 (KKLM…LGGQ), 1516–1638 (IETN…FLDW), 1708–1818 (VSVD…FQGG), 1837–1938 (WRLY…LGRR), and 1971–2078 (ATEF…FPSW). Positions 2107-2170 (KLCKTIYPLA…VNLKKSKGLF (64 aa)) constitute an HP domain.

This sequence belongs to the villin/gelsolin family. Associates with F-actin. Interacts with NEB. Interacts with MYH9. Interacts with MYLK. Interacts with TASOR. In terms of assembly, interacts with TRIP6. Interacts with DYNLT1. Interacts with KIF14; at midbody during cytokinesis. As to expression, expressed in the heart, tongue and granular cells within the cerebellum.

It is found in the cell membrane. It localises to the cytoplasm. The protein localises to the cytoskeleton. Its subcellular location is the cell projection. The protein resides in the invadopodium. It is found in the podosome. It localises to the midbody. The protein localises to the cleavage furrow. Its function is as follows. Forms a high-affinity link between the actin cytoskeleton and the membrane. Is among the first costameric proteins to assemble during myogenesis and it contributes to myogenic membrane structure and differentiation. Appears to be involved in myosin II assembly. May modulate myosin II regulation through MLCK during cell spreading, an initial step in cell migration. May play a role in invadopodial function. In terms of biological role, may be involved in modulation of focal adhesions. Supervillin-mediated down-regulation of focal adhesions involves binding to TRIP6. Plays a role in cytokinesis through KIF14 interaction. The sequence is that of Supervillin (Svil) from Mus musculus (Mouse).